A 344-amino-acid polypeptide reads, in one-letter code: Phosphoserine phosphatase (344 aa).

In terms of domain architecture, ACT spans 48 to 120 (VVTILGKDRV…ERLGLDIVMQ (73 aa)). The active-site Nucleophile is Asp135. Mg(2+)-binding residues include Asp135 and Asp137. The active-site Proton donor is Asp137. Substrate-binding positions include Glu144, Arg180, 223–224 (SG), and Lys268. Asp291 is a binding site for Mg(2+).

This sequence belongs to the HAD-like hydrolase superfamily. SerB family. The cofactor is Mg(2+).

It catalyses the reaction O-phospho-L-serine + H2O = L-serine + phosphate. It carries out the reaction O-phospho-D-serine + H2O = D-serine + phosphate. The protein operates within amino-acid biosynthesis; L-serine biosynthesis; L-serine from 3-phospho-D-glycerate: step 3/3. The polypeptide is Phosphoserine phosphatase (Archaeoglobus fulgidus (strain ATCC 49558 / DSM 4304 / JCM 9628 / NBRC 100126 / VC-16)).